Consider the following 620-residue polypeptide: Probable potassium transport system protein Kup 1 (620 aa).

Transmembrane regions (helical) follow at residues 10–30 (LLIS…LYAL), 50–70 (VLSL…VIVI), 102–122 (MLLG…TPAI), 138–158 (LTPY…MIQK), 168–188 (FGPV…VNIV), 211–231 (MMSF…EALY), 246–266 (WFAL…ALLL), 284–304 (MVVP…QAVI), 336–356 (IYIP…VIGF), 368–388 (IAVT…MALM), 393–413 (WIAV…FFFA), and 415–435 (IIKV…SFTV).

This sequence belongs to the HAK/KUP transporter (TC 2.A.72) family.

It is found in the cell inner membrane. It carries out the reaction K(+)(in) + H(+)(in) = K(+)(out) + H(+)(out). In terms of biological role, transport of potassium into the cell. Likely operates as a K(+):H(+) symporter. The chain is Probable potassium transport system protein Kup 1 from Rhodopseudomonas palustris (strain BisB18).